The sequence spans 199 residues: Hematopoietic prostaglandin D synthase (199 aa).

Residues 2–79 form the GST N-terminal domain; that stretch reads PNYKLLYFNM…YLTKNTDLAG (78 aa). Glutathione contacts are provided by residues Tyr-8, Arg-14, Trp-39, 49–51, and 63–64; these read GKI and QS. Residues 81–199 form the GST C-terminal domain; the sequence is TELEQCQVDA…WILKRPQTKL (119 aa).

Belongs to the GST superfamily. Sigma family. In terms of assembly, homodimer. Glutathione serves as cofactor. As to expression, highly expressed in spleen and bone marrow. Lower levels of expression in small intestine, colon, liver, pancreas and skin. Not detected in brain, heart, lung or kidney (at protein level).

It localises to the cytoplasm. It catalyses the reaction prostaglandin H2 = prostaglandin D2. The enzyme catalyses RX + glutathione = an S-substituted glutathione + a halide anion + H(+). It carries out the reaction 2-glyceryl-prostaglandin H2 = 2-glyceryl-prostaglandin D2. In terms of biological role, bifunctional enzyme which catalyzes both the conversion of PGH2 to PGD2, a prostaglandin involved in smooth muscle contraction/relaxation and a potent inhibitor of platelet aggregation, and the conjugation of glutathione with a wide range of aryl halides and organic isothiocyanates. Also exhibits low glutathione-peroxidase activity towards cumene hydroperoxide. This is Hematopoietic prostaglandin D synthase from Rattus norvegicus (Rat).